An 82-amino-acid polypeptide reads, in one-letter code: Protein C2 (82 aa).

The chain is Protein C2 (C2) from Sterkiella nova (Ciliate).